The sequence spans 393 residues: uncharacterized protein (393 aa).

An ATP-binding site is contributed by 67–74; that stretch reads GPDGMGKS.

This is an uncharacterized protein from Mycobacterium tuberculosis (strain CDC 1551 / Oshkosh).